The following is a 428-amino-acid chain: Glutamate-1-semialdehyde 2,1-aminomutase (428 aa).

Residue lysine 267 is modified to N6-(pyridoxal phosphate)lysine.

The protein belongs to the class-III pyridoxal-phosphate-dependent aminotransferase family. HemL subfamily. As to quaternary structure, homodimer. Requires pyridoxal 5'-phosphate as cofactor.

It localises to the cytoplasm. It carries out the reaction (S)-4-amino-5-oxopentanoate = 5-aminolevulinate. The protein operates within porphyrin-containing compound metabolism; protoporphyrin-IX biosynthesis; 5-aminolevulinate from L-glutamyl-tRNA(Glu): step 2/2. This chain is Glutamate-1-semialdehyde 2,1-aminomutase, found in Flavobacterium johnsoniae (strain ATCC 17061 / DSM 2064 / JCM 8514 / BCRC 14874 / CCUG 350202 / NBRC 14942 / NCIMB 11054 / UW101) (Cytophaga johnsonae).